The primary structure comprises 118 residues: Cycloviolacin-O11 (118 aa).

The N-terminal stretch at 1–22 (MEMKNMVVGLFLIAAFALPALA) is a signal peptide. The propeptide occupies 23-84 (TSFEKDFITH…THSNSINALG (62 aa)). Positions 85-115 (GTLPCGESCVWIPCISAVVGCSCKSKVCYKN) form a cross-link, cyclopeptide (Gly-Asn). 3 cysteine pairs are disulfide-bonded: C89/C105, C93/C107, and C98/C112. The propeptide occupies 116–118 (SLA).

Post-translationally, cycloviolacin-O11 is a cyclic peptide. Expressed in leaves, petals and petioles but not in roots and runners (at protein level).

Probably participates in a plant defense mechanism. The sequence is that of Cycloviolacin-O11 (Voc2) from Viola odorata (Sweet violet).